Consider the following 226-residue polypeptide: uncharacterized protein (226 aa).

4 consecutive transmembrane segments (helical) span residues 25–45 (ALAW…IFLI), 54–74 (FLLF…YFIF), 107–127 (ELFL…YFFI), and 153–173 (TITI…CFSS).

The protein resides in the cell membrane. This is an uncharacterized protein from Mycoplasma genitalium (strain ATCC 33530 / DSM 19775 / NCTC 10195 / G37) (Mycoplasmoides genitalium).